Reading from the N-terminus, the 221-residue chain is PKHD-type hydroxylase PMT9312_1262 (221 aa).

Residues 80–174 (IIHGIMFTKS…RLVCVGWIES (95 aa)) form the Fe2OG dioxygenase domain. Fe cation-binding residues include H98, D100, and H155. 2-oxoglutarate is bound at residue R165.

Fe(2+) is required as a cofactor. L-ascorbate serves as cofactor.

This chain is PKHD-type hydroxylase PMT9312_1262, found in Prochlorococcus marinus (strain MIT 9312).